The primary structure comprises 100 residues: uncharacterized protein (100 aa).

The first 17 residues, 1–17 (MIMKYFCTVMIAIALVG), serve as a signal peptide directing secretion. C18 carries the N-palmitoyl cysteine lipid modification. The S-diacylglycerol cysteine moiety is linked to residue C18.

It is found in the cell membrane. This is an uncharacterized protein from Salmonella typhi.